Here is a 524-residue protein sequence, read N- to C-terminus: Portal protein (524 aa).

Residues 486-516 adopt a coiled-coil conformation; that stretch reads AMKDILQMTDEEIEQEAKQIEEESKEARFQD. The span at 500-516 shows a compositional bias: basic and acidic residues; it reads QEAKQIEEESKEARFQD. Residues 500–524 are disordered; sequence QEAKQIEEESKEARFQDPDQEQEDF.

The protein belongs to the Tevenvirinae portal protein family. In terms of assembly, homododecamer. Interacts with the large terminase subunit. Interacts with the major capsid protein. Interacts with the capsid vertex protein.

Its subcellular location is the virion. It is found in the host cell inner membrane. In terms of biological role, forms the portal vertex of the capsid. This portal plays critical roles in head assembly, genome packaging, neck/tail attachment, and genome ejection. The portal protein multimerizes as a single ring-shaped homododecamer arranged around a central channel. Binds to the terminase subunits to form the packaging machine. Attaches to the host inner membrane most likely through interaction with host yidC and forms together with chaperone gp40 an initiator complex to form the prohead. This chain is Portal protein (20), found in Enterobacteria phage T4 (Bacteriophage T4).